The sequence spans 86 residues: Large ribosomal subunit protein uL23 (86 aa).

The protein belongs to the universal ribosomal protein uL23 family. As to quaternary structure, part of the 50S ribosomal subunit. Contacts protein L29.

Binds to 23S rRNA. One of the proteins that surrounds the polypeptide exit tunnel on the outside of the ribosome. In Methanococcus vannielii (strain ATCC 35089 / DSM 1224 / JCM 13029 / OCM 148 / SB), this protein is Large ribosomal subunit protein uL23.